A 169-amino-acid chain; its full sequence is Ureidoglycolate lyase (169 aa).

It belongs to the ureidoglycolate lyase family. In terms of assembly, homodimer. Requires Ni(2+) as cofactor.

It catalyses the reaction (S)-ureidoglycolate = urea + glyoxylate. It participates in nitrogen metabolism; (S)-allantoin degradation. Catalyzes the catabolism of the allantoin degradation intermediate (S)-ureidoglycolate, generating urea and glyoxylate. Involved in the utilization of allantoin as nitrogen source. The sequence is that of Ureidoglycolate lyase from Brucella melitensis biotype 2 (strain ATCC 23457).